Reading from the N-terminus, the 608-residue chain is Eukaryotic translation initiation factor 2A (608 aa).

The tract at residues 1–42 (MSAPNNNNNNTTTTTTTSPSPSQSSPTLTSVASNSTTTTTTE) is disordered. WD repeat units follow at residues 115–161 (INRP…ILYK), 207–255 (IKLQ…EYCS), 310–350 (NIKG…PLVD), and 351–393 (FGLN…RICG). Composition is skewed to low complexity over residues 466-478 (SIQQ…PQPQ) and 520-544 (STFK…TTKP). Disordered stretches follow at residues 466–499 (SIQQ…TSPP) and 520–554 (STFK…RELT). Residues 545–554 (AADEPKRELT) show a composition bias toward basic and acidic residues. A coiled-coil region spans residues 550–608 (KRELTPIEKKIRNVERKLKEVEVLKEKLNSGEFIPPTAIEKINNEQKFLEELRKLQSEL).

Belongs to the WD repeat EIF2A family.

Functions in the early steps of protein synthesis of a small number of specific mRNAs. Acts by directing the binding of methionyl-tRNAi to 40S ribosomal subunits. In contrast to the eIF-2 complex, it binds methionyl-tRNAi to 40S subunits in a codon-dependent manner, whereas the eIF-2 complex binds methionyl-tRNAi to 40S subunits in a GTP-dependent manner. This chain is Eukaryotic translation initiation factor 2A (eif2a), found in Dictyostelium discoideum (Social amoeba).